The chain runs to 992 residues: Ankyrin repeat domain-containing protein 18A (992 aa).

ANK repeat units lie at residues 67–96 (KDRTVLHLACAHGRVQVVTLLLHRRCQIDI), 100–129 (LNRTPLMKAVHSQEEACAIVLLECGANPNI), 133–162 (YGNTALHYAVYNKGTSLAERLLSHHANIEA), 166–195 (EGNTPLLFAINSRRQHMVEFLLKNQANIHA), and 199–228 (FKRTALILAVQHNLSSIVTLLLQQNIRISS). The tract at residues 262–320 (NHLRNDNQETAAMKPANLKKRKERAKAEHNLKVASEEKQERLQRSENKQPQDSQSYGKK) is disordered. 4 coiled-coil regions span residues 278-310 (NLKKRKERAKAEHNLKVASEEKQERLQRSENKQ), 378-618 (KMIT…AERE), 683-713 (ISLLNYTADQIRKKNRELEEEATGYKKCLEM), and 743-899 (FKKL…EAFA). The segment covering 286-310 (AKAEHNLKVASEEKQERLQRSENKQ) has biased composition (basic and acidic residues).

This Homo sapiens (Human) protein is Ankyrin repeat domain-containing protein 18A (ANKRD18A).